Consider the following 311-residue polypeptide: Heme A synthase (311 aa).

Over 1–6 the chain is Cytoplasmic; that stretch reads MQRFIK. The helical transmembrane segment at 7–27 threads the bilayer; it reads WLAVITSLDLLVVLLGGALVT. Over 28–62 the chain is Extracellular; it reads KTGSGQGCGKSWPLCNGEFVPSNLSMETIIELSHR. A disulfide bridge links Cys-35 with Cys-42. Glu-58 is an active-site residue. Heme o is bound at residue His-61. The chain crosses the membrane as a helical span at residues 63 to 83; the sequence is LTSGSAGILVTLLCILSWKYY. The Cytoplasmic portion of the chain corresponds to 84–91; the sequence is KHVRETKT. Residues 92-112 form a helical membrane-spanning segment; that stretch reads LAILSFVFLVAQALMGAAAVV. Residues 113 to 121 lie on the Extracellular side of the membrane; sequence WGQMPAVLA. The chain crosses the membrane as a helical span at residues 122 to 142; that stretch reads IHFGISLISFASVILLTCLIF. Residue His-123 coordinates heme o. Residues 143 to 159 are Cytoplasmic-facing; sequence EIDQKFDARSLIMDKKM. The helical transmembrane segment at 160-180 threads the bilayer; the sequence is KFHIYGVTIYSYIVVYTGALV. Residues 181-211 are Extracellular-facing; it reads RHERATLACPDFPLCSKSRPMPTQLHEWVQM. Cys-189 and Cys-195 are disulfide-bonded. A helical membrane pass occupies residues 212-232; the sequence is GHRVAAMLIFAWILYAMIIAI. Heme b is bound at residue His-213. Topologically, residues 233 to 243 are cytoplasmic; sequence RHYKQQRVVYW. The chain crosses the membrane as a helical span at residues 244–264; it reads GWIISFILVTLQAIVGILVVF. The Extracellular portion of the chain corresponds to 265-271; sequence TNASLAM. The helical transmembrane segment at 272–292 threads the bilayer; that stretch reads ALLHSLFISCLFAVLCYLVMI. Residue His-275 participates in heme b binding. The Cytoplasmic portion of the chain corresponds to 293 to 311; sequence GTRSTVNAKETESTSKQTK.

It belongs to the COX15/CtaA family. Type 1 subfamily. Interacts with CtaB. Requires heme b as cofactor.

The protein localises to the cell membrane. The catalysed reaction is Fe(II)-heme o + 2 A + H2O = Fe(II)-heme a + 2 AH2. The protein operates within porphyrin-containing compound metabolism; heme A biosynthesis; heme A from heme O: step 1/1. Catalyzes the conversion of heme O to heme A by two successive hydroxylations of the methyl group at C8. The first hydroxylation forms heme I, the second hydroxylation results in an unstable dihydroxymethyl group, which spontaneously dehydrates, resulting in the formyl group of heme A. The protein is Heme A synthase of Bacillus mycoides (strain KBAB4) (Bacillus weihenstephanensis).